A 248-amino-acid polypeptide reads, in one-letter code: Ribonuclease 3 (248 aa).

Residues 16–145 (TEGLETSIGY…LLAAMYLDGG (130 aa)) form the RNase III domain. Glutamate 58 is a binding site for Mg(2+). Aspartate 62 is an active-site residue. Mg(2+) is bound by residues asparagine 131 and glutamate 134. The active site involves glutamate 134. In terms of domain architecture, DRBM spans 172–241 (DFKTDFQELA…ARQCLERLET (70 aa)).

This sequence belongs to the ribonuclease III family. As to quaternary structure, homodimer. Mg(2+) is required as a cofactor.

The protein localises to the cytoplasm. The catalysed reaction is Endonucleolytic cleavage to 5'-phosphomonoester.. Digests double-stranded RNA. Involved in the processing of primary rRNA transcript to yield the immediate precursors to the large and small rRNAs (23S and 16S). Processes some mRNAs, and tRNAs when they are encoded in the rRNA operon. Processes pre-crRNA and tracrRNA of type II CRISPR loci if present in the organism. The protein is Ribonuclease 3 of Geobacter sulfurreducens (strain ATCC 51573 / DSM 12127 / PCA).